The sequence spans 134 residues: uncharacterized protein (134 aa).

The protein to E.coli YbcV and YdfO.

This is an uncharacterized protein from Escherichia coli (strain K12).